Here is a 281-residue protein sequence, read N- to C-terminus: MNNLTGILYIVATPIGNLQDITQRALAIFEQVDLIAAEDTRHSGLLLSHYGIKKPFFALHDHNEQQKAHLLVEKLQQGQHIALISDAGTPLISDPGFHLVRQCRQAGIKVVPIPGACAAVTALCASGIASDRFCFEGFLPAKSKARCDKLQNLAEEERTLIFYESTHRILDTLADIEKTLGAERYVVLAREITKTWETIVGDNVANLRQWLGEDPNRTKGEMVLIIEGKVKQETDEINPQALKALELISQSLPLKKAAAIVAEIYGYKKNALYQYGLEHFN.

The protein belongs to the methyltransferase superfamily. RsmI family.

Its subcellular location is the cytoplasm. The catalysed reaction is cytidine(1402) in 16S rRNA + S-adenosyl-L-methionine = 2'-O-methylcytidine(1402) in 16S rRNA + S-adenosyl-L-homocysteine + H(+). In terms of biological role, catalyzes the 2'-O-methylation of the ribose of cytidine 1402 (C1402) in 16S rRNA. The chain is Ribosomal RNA small subunit methyltransferase I from Pasteurella multocida (strain Pm70).